The chain runs to 131 residues: Transcription antitermination protein NusB (131 aa).

Belongs to the NusB family.

Involved in transcription antitermination. Required for transcription of ribosomal RNA (rRNA) genes. Binds specifically to the boxA antiterminator sequence of the ribosomal RNA (rrn) operons. This chain is Transcription antitermination protein NusB, found in Bacillus subtilis (strain 168).